The chain runs to 431 residues: MAACSRGLVARPFDLTARGAAHWPCPAPRRRAIRCCCRAQQEPRRRLSKAAAAAPERTEEWRIDGNKPAAAARGRRRASLTAMPSLPFPSPRSRRQWKQQNFYPRCTPRGPAPQSRDTPPKRDTGIASEKEWGINLLDEAVKESGTNEDGSTWYRESGDDRGDNGYRCRWARMGGQSHDGTTEWKETWWEKSDWTGYKELGAEKSGKNGEGDSWWEKWKEVLYQDEWSNLARIERSAEKQAKSGAENAGWYEKWWEKYDAKGWTEKGAHKYGRLNEQSWWERWGEHYDGRGFVLKWTDKWAETDLGTKWGDKWEEKFFAGIGSRQGETWHVSPGGDRWSRTWGEEHFGNGKVHKYGKSTTGESWDLVVDEETYYEAEPHYGWADVVGDSTQLLSIQPVERPPGVYPTIDFSASSPAPPSDDPPGMPPSPLE.

The transit peptide at 1–19 (MAACSRGLVARPFDLTARG) directs the protein to the chloroplast. Disordered stretches follow at residues 65–126 (GNKP…DTGI) and 403–431 (GVYP…SPLE). Over residues 415–431 (PAPPSDDPPGMPPSPLE) the composition is skewed to pro residues.

Belongs to the ESV1 family.

The protein localises to the plastid. Its subcellular location is the chloroplast stroma. Binds preferentially to highly ordered alpha-glucans, such as starch and crystalline maltodextrins. Involved in the organization of the starch granule matrix, thus influencing starch turnover by modulating the accessibility of starch polymers to modifying and degrading enzymes. Required for the control of starch degradation in leaves and starch distribution in nonphotosynthetic parts. Promotes gravitropic responses, negative in shoots but positive in roots, by facilitating starch granules (statoliths) formation in hypocotyls and roots columella. Facilitates tight packing of starch granules in grains. This is Protein EARLY STARVATION 1, chloroplastic from Oryza sativa subsp. japonica (Rice).